The chain runs to 681 residues: MASAKGSKPNLPESNIAIGIDLGTTYSCVGVWRNENVDIIANDQGNRTTPSYVAFTDTERLIGDAAKNQVARNPENTVFDAKRLIGRKFTESSVQSDMKHWPFTVKSGVDEKPMIEVTYQGEKKLFHPEEISSMVLQKMKENAEAFLGKSIKNAVITVPAYFNDSQRQATKDAGTIAGLNVMRIINEPTAAAIAYGLHKKGKGEKNILIFDLGGGTFDVSLLTIEDGIFEVKATAGDTHLGGEDFDNRLVNFCVEDFKRKNRGKDLSKNSRALRRLRTQCERAKRTLSSSTQATIEIDSLFEGIDYSVTVSRARFEELCIDYFRDTLIPVEKVLKDAMMDKKSVHEVVLVGGSTRIPKIQTLIKEFFNGKEACRSINPDEAVAYGAAVQAAILSGDQSNAVQDLLLLDVCSLSLGLETAGGVMTKLIERNTTIPAKKSQIFTTYADNQPGVLIQVYEGERALTKDNNLLGKFHLDGIPPAPRKVPQIEVTFDIDANGILNVTAVEKSTGKQNHITITNDKGRLSQDEIDRMVNDAEKYKAEDEENRKRIEARNSLENYCYGVKSSLEDQKIKEKLQPAEIETCMKTITTILEWLEKNQLAGKDEYEAKQKEAESVCAPIMSKIYQDAAGAAGGMPGGMPGGMPGGMPSGMPGGMNFPGGMPGAGMPGNAPAGSGPTVEEVD.

The span at 655–665 (NFPGGMPGAGM) shows a compositional bias: gly residues. A disordered region spans residues 655–681 (NFPGGMPGAGMPGNAPAGSGPTVEEVD). Positions 666-675 (PGNAPAGSGP) are enriched in low complexity.

The protein belongs to the heat shock protein 70 family.

This Plasmodium falciparum protein is Heat shock 70 kDa protein.